The sequence spans 149 residues: Large ribosomal subunit protein bL9 (149 aa).

It belongs to the bacterial ribosomal protein bL9 family.

Binds to the 23S rRNA. The polypeptide is Large ribosomal subunit protein bL9 (Citrobacter koseri (strain ATCC BAA-895 / CDC 4225-83 / SGSC4696)).